The chain runs to 690 residues: Guanylate cyclase soluble subunit alpha-1 (690 aa).

S267 is subject to Phosphoserine. A Guanylate cyclase domain is found at 481 to 608 (TMLFSDIVGF…NNVTLANKFE (128 aa)).

The protein belongs to the adenylyl cyclase class-4/guanylyl cyclase family. The active enzyme is formed by a heterodimer of an alpha and a beta subunit. Heterodimer with GUCY1B1. It depends on Mg(2+) as a cofactor. The cofactor is Mn(2+).

It localises to the cytoplasm. It carries out the reaction GTP = 3',5'-cyclic GMP + diphosphate. Activated by nitric oxide in the presence of magnesium or manganese ions. In Canis lupus familiaris (Dog), this protein is Guanylate cyclase soluble subunit alpha-1 (GUCY1A1).